A 1426-amino-acid chain; its full sequence is MSGKPAARQGDMTQYGGPIVQGSAGVRIGAPTGVACSVCPGGMTSGNPVNPLLGAKVLPGETDLALPGPLPFILSRTYSSYRTKTPAPVGVFGPGWKAPSDIRLQLRDDGLILNDNGGRSIHFEPLLPGEAVYSRSESMWLVRGGKAAQPDGHTLARLWGALPPDIRLSPHLYLATNSAQGPWWILGWSERVPGAEDVLPAPLPPYRVLTGMADRFGRTLTYRREAAGDLAGEITGVTDGAGREFRLVLTTQAQRAEEARTSSLSSSDSSRPLSASAFPDTLPGTEYGPDRGIRLSAVWLMHDPAYPESLPAAPLVRYTYTEAGELLAVYDRSNTQVRAFTYDAQHPGRMVAHRYAGRPEMRYRYDDTGRVVEQLNPAGLSYRYLYEQDRITVTDSLNRREVLHTEGGAGLKRVVKKELADGSVTRSGYDAAGRLTAQTDAAGRRTEYGLNVVSGDITDITTPDGRETKFYYNDGNQLTAVVSPDGLESRREYDEPGRLVSETSRSGETVRYRYDDAHSELPATTTDATGSTRQMTWSRYGQLLAFTDCSGYQTRYEYDRFGQMTAVHREEGISLYRRYDNRGRLTSVKDAQGRETRYEYNAAGDLTAVITPDGNRSETQYDAWGKAVSTTQGGLTRSMEYDAAGRVISLTNENGSHSVFSYDALDRLVQQGGFDGRTQRYHYDLTGKLTQSEDEGLVILWYYDESDRITHRTVNGEPAEQWQYDGHGWLTDISHLSEGHRVAVHYGYDDKGRLTGECQTVENPETGELLWQHETKHAYNEQGLANRVTPDSLPPVEWLTYGSGYLAGMKLGGTPLVEYTRDRLHRETVRSFGSMAGSNAAYELTSTYTPAGQLQSQHLNSLVYDRDYGWSDNGDLVRISGPRQTREYGYSATGRLESVRTLAPDLDIRIPYATDPAGNRLPDPELHPDSTLTVWPDNRIAEDAHYVYRHDEYGRLTEKTDRIPAGVIRTDDERTHHYHYDSQHRLVFYTRIQHGEPLVESRYLYDPLGRRMAKRVWRRERDLTGWMSLSRKPEVTWYGWDGDRLTTVQTDTTRIQTVYEPGSFTPLIRVETENGEREKAQRRSLAETLQQEGSENGHGVVFPAELVRLLDRLEEEIRADRVSSESRAWLAQCGLTVEQLARQVEPEYTPARKAHLYHCDHRGLPLALISEDGNTAWSAEYDEWGNQLNEENPHHVYQPYRLPGQQHDEESGLYYNRHRYYDPLQGRYITQDPMGLKGGWNLYQYPLNPLQQIDPMGLLQTWDDARSGACTGGVCGVLSRIIGPSKFDSTADAALDALKETQNRSLCNDMEYSGIVCKDTNGKYFASKAETDNLRKESYPLKRKCPTGTDRVAAYHTHGADSHGDYVDEFFSSSDKNLVRSKDNNLEAFYLATPDGRFEALNNKGEYIFIRNSVPGLSSVCIPYHD.

The disordered stretch occupies residues 256–285; the sequence is AEEARTSSLSSSDSSRPLSASAFPDTLPGT. Residues 262-277 show a composition bias toward low complexity; the sequence is SSLSSSDSSRPLSASA. A 28 X approximate tandem repeats region spans residues 320–1197; the sequence is YTEAGELLAV…LNEENPHHVY (878 aa). 27 tandem repeats follow at residues 334–356, 357–378, 379–421, 422–442, 443–464, 465–485, 486–506, 507–529, 530–550, 551–571, 572–592, 593–613, 614–633, 634–654, 655–675, 676–695, 696–715, 716–738, 739–762, 812–832, 833–861, 862–882, 883–905, 906–941, 942–970, 971–995, and 996–1030. The segment covering 1073 to 1085 has biased composition (basic and acidic residues); that stretch reads ENGEREKAQRRSL. Residues 1073-1097 form a disordered region; sequence ENGEREKAQRRSLAETLQQEGSENG. Repeat unit 28 spans residues 1173–1197; it reads GNTAWSAEYDEWGNQLNEENPHHVY.

Belongs to the RHS family.

Rhs elements have a nonessential function. They may play an important role in the natural ecology of the cell. This chain is Protein RhsD (rhsD), found in Escherichia coli (strain K12).